The primary structure comprises 280 residues: Acyl-[acyl-carrier-protein]--UDP-N-acetylglucosamine O-acyltransferase (280 aa).

The protein belongs to the transferase hexapeptide repeat family. LpxA subfamily. In terms of assembly, homotrimer.

Its subcellular location is the cytoplasm. The enzyme catalyses a (3R)-hydroxyacyl-[ACP] + UDP-N-acetyl-alpha-D-glucosamine = a UDP-3-O-[(3R)-3-hydroxyacyl]-N-acetyl-alpha-D-glucosamine + holo-[ACP]. It functions in the pathway glycolipid biosynthesis; lipid IV(A) biosynthesis; lipid IV(A) from (3R)-3-hydroxytetradecanoyl-[acyl-carrier-protein] and UDP-N-acetyl-alpha-D-glucosamine: step 1/6. In terms of biological role, involved in the biosynthesis of lipid A, a phosphorylated glycolipid that anchors the lipopolysaccharide to the outer membrane of the cell. This chain is Acyl-[acyl-carrier-protein]--UDP-N-acetylglucosamine O-acyltransferase, found in Chlamydia trachomatis serovar A (strain ATCC VR-571B / DSM 19440 / HAR-13).